The following is a 602-amino-acid chain: Chaperone protein dnaK (602 aa).

This sequence belongs to the heat shock protein 70 family.

The protein localises to the plastid. The protein resides in the chloroplast. Its function is as follows. Acts as a chaperone. The protein is Chaperone protein dnaK of Thalassiosira pseudonana (Marine diatom).